The sequence spans 247 residues: Mannose-P-dolichol utilization defect 1 protein (247 aa).

A2 is modified (N-acetylalanine). 7 helical membrane passes run 37–57 (CLKI…SLLV), 74–94 (LSLQ…VYSI), 100–120 (FSSW…CFLV), 128–145 (VKGV…LVLL), 151–171 (LTVV…GRLL), 185–205 (LSAI…FTSI), and 213–233 (MAGT…QLLF). The PQ-loop 1 domain maps to 39 to 105 (KILLSKGLGL…NNFPFSSWGE (67 aa)). The 58-residue stretch at 159–216 (ASNVPAVVVGRLLQAATNYHNGHTGQLSAITVFLLFGGSLARIFTSIQETGDPLMAGT) folds into the PQ-loop 2 domain.

The protein belongs to the MPDU1 (TC 2.A.43.3) family.

Its subcellular location is the membrane. In terms of biological role, required for normal utilization of mannose-dolichol phosphate (Dol-P-Man) in the synthesis of N-linked and O-linked oligosaccharides and GPI anchors. The sequence is that of Mannose-P-dolichol utilization defect 1 protein (MPDU1) from Homo sapiens (Human).